A 498-amino-acid chain; its full sequence is Glycerol kinase (498 aa).

Residue Thr12 coordinates ADP. The ATP site is built by Thr12, Thr13, and Ser14. Residue Thr12 participates in sn-glycerol 3-phosphate binding. Residue Arg16 participates in ADP binding. Residues Arg82, Glu83, Tyr134, and Asp244 each contribute to the sn-glycerol 3-phosphate site. Positions 82, 83, 134, 244, and 245 each coordinate glycerol. Residues Thr266 and Gly309 each coordinate ADP. Thr266, Gly309, Gln313, and Gly410 together coordinate ATP. ADP-binding residues include Gly410 and Asn414.

This sequence belongs to the FGGY kinase family. In terms of assembly, homotetramer and homodimer (in equilibrium).

It carries out the reaction glycerol + ATP = sn-glycerol 3-phosphate + ADP + H(+). The protein operates within polyol metabolism; glycerol degradation via glycerol kinase pathway; sn-glycerol 3-phosphate from glycerol: step 1/1. Its activity is regulated as follows. Activated by phosphorylation and inhibited by fructose 1,6-bisphosphate (FBP). In terms of biological role, key enzyme in the regulation of glycerol uptake and metabolism. Catalyzes the phosphorylation of glycerol to yield sn-glycerol 3-phosphate. In Natranaerobius thermophilus (strain ATCC BAA-1301 / DSM 18059 / JW/NM-WN-LF), this protein is Glycerol kinase.